The primary structure comprises 202 residues: Glycerol-3-phosphate acyltransferase (202 aa).

6 helical membrane passes run Met2–Ile22, Phe54–Phe74, Phe85–Tyr105, Val120–Leu140, Tyr141–Ser161, and Leu162–Val182.

This sequence belongs to the PlsY family. As to quaternary structure, probably interacts with PlsX.

The protein resides in the cell membrane. The catalysed reaction is an acyl phosphate + sn-glycerol 3-phosphate = a 1-acyl-sn-glycero-3-phosphate + phosphate. It participates in lipid metabolism; phospholipid metabolism. In terms of biological role, catalyzes the transfer of an acyl group from acyl-phosphate (acyl-PO(4)) to glycerol-3-phosphate (G3P) to form lysophosphatidic acid (LPA). This enzyme utilizes acyl-phosphate as fatty acyl donor, but not acyl-CoA or acyl-ACP. This Staphylococcus haemolyticus (strain JCSC1435) protein is Glycerol-3-phosphate acyltransferase.